The following is a 138-amino-acid chain: ATP synthase epsilon chain (138 aa).

The protein belongs to the ATPase epsilon chain family. F-type ATPases have 2 components, CF(1) - the catalytic core - and CF(0) - the membrane proton channel. CF(1) has five subunits: alpha(3), beta(3), gamma(1), delta(1), epsilon(1). CF(0) has three main subunits: a, b and c.

The protein resides in the cell membrane. Functionally, produces ATP from ADP in the presence of a proton gradient across the membrane. In Streptococcus equi subsp. equi (strain 4047), this protein is ATP synthase epsilon chain.